The primary structure comprises 89 residues: Small ribosomal subunit protein uS15 (89 aa).

Belongs to the universal ribosomal protein uS15 family. In terms of assembly, part of the 30S ribosomal subunit. Forms a bridge to the 50S subunit in the 70S ribosome, contacting the 23S rRNA.

In terms of biological role, one of the primary rRNA binding proteins, it binds directly to 16S rRNA where it helps nucleate assembly of the platform of the 30S subunit by binding and bridging several RNA helices of the 16S rRNA. Forms an intersubunit bridge (bridge B4) with the 23S rRNA of the 50S subunit in the ribosome. In Magnetococcus marinus (strain ATCC BAA-1437 / JCM 17883 / MC-1), this protein is Small ribosomal subunit protein uS15.